We begin with the raw amino-acid sequence, 218 residues long: Uracil-DNA glycosylase (218 aa).

Catalysis depends on Asp-59, which acts as the Proton acceptor.

This sequence belongs to the uracil-DNA glycosylase (UDG) superfamily. UNG family.

It localises to the cytoplasm. The catalysed reaction is Hydrolyzes single-stranded DNA or mismatched double-stranded DNA and polynucleotides, releasing free uracil.. Its function is as follows. Excises uracil residues from the DNA which can arise as a result of misincorporation of dUMP residues by DNA polymerase or due to deamination of cytosine. The polypeptide is Uracil-DNA glycosylase (Staphylococcus aureus (strain MSSA476)).